Here is a 277-residue protein sequence, read N- to C-terminus: 3-methyl-2-oxobutanoate hydroxymethyltransferase (277 aa).

The Mg(2+) site is built by Asp-53 and Asp-96. 3-methyl-2-oxobutanoate is bound by residues 53–54, Asp-96, and Lys-126; that span reads DS. A Mg(2+)-binding site is contributed by Glu-128. Glu-195 functions as the Proton acceptor in the catalytic mechanism.

Belongs to the PanB family. Homodecamer; pentamer of dimers. Mg(2+) is required as a cofactor.

The protein localises to the cytoplasm. The catalysed reaction is 3-methyl-2-oxobutanoate + (6R)-5,10-methylene-5,6,7,8-tetrahydrofolate + H2O = 2-dehydropantoate + (6S)-5,6,7,8-tetrahydrofolate. It participates in cofactor biosynthesis; (R)-pantothenate biosynthesis; (R)-pantoate from 3-methyl-2-oxobutanoate: step 1/2. In terms of biological role, catalyzes the reversible reaction in which hydroxymethyl group from 5,10-methylenetetrahydrofolate is transferred onto alpha-ketoisovalerate to form ketopantoate. The polypeptide is 3-methyl-2-oxobutanoate hydroxymethyltransferase (Chlorobium phaeobacteroides (strain DSM 266 / SMG 266 / 2430)).